The chain runs to 413 residues: Multifunctional CCA protein (413 aa).

Positions 8 and 11 each coordinate ATP. Residues Gly8 and Arg11 each contribute to the CTP site. The Mg(2+) site is built by Asp21 and Asp23. Arg91, Arg143, and Arg146 together coordinate ATP. 3 residues coordinate CTP: Arg91, Arg143, and Arg146. The region spanning 232–333 is the HD domain; that stretch reads TGVHVMMVVD…VRLFERSDAL (102 aa).

This sequence belongs to the tRNA nucleotidyltransferase/poly(A) polymerase family. Bacterial CCA-adding enzyme type 1 subfamily. As to quaternary structure, monomer. Can also form homodimers and oligomers. The cofactor is Mg(2+). Ni(2+) is required as a cofactor.

It carries out the reaction a tRNA precursor + 2 CTP + ATP = a tRNA with a 3' CCA end + 3 diphosphate. The enzyme catalyses a tRNA with a 3' CCA end + 2 CTP + ATP = a tRNA with a 3' CCACCA end + 3 diphosphate. Its function is as follows. Catalyzes the addition and repair of the essential 3'-terminal CCA sequence in tRNAs without using a nucleic acid template. Adds these three nucleotides in the order of C, C, and A to the tRNA nucleotide-73, using CTP and ATP as substrates and producing inorganic pyrophosphate. tRNA 3'-terminal CCA addition is required both for tRNA processing and repair. Also involved in tRNA surveillance by mediating tandem CCA addition to generate a CCACCA at the 3' terminus of unstable tRNAs. While stable tRNAs receive only 3'-terminal CCA, unstable tRNAs are marked with CCACCA and rapidly degraded. The protein is Multifunctional CCA protein of Burkholderia orbicola (strain MC0-3).